Reading from the N-terminus, the 382-residue chain is uncharacterized protein (382 aa).

Helical transmembrane passes span 8-28 (VLLL…LNTL), 39-61 (PTWQ…TLLT), 75-95 (YLAS…VGFW), 102-122 (FIAG…LMCS), 131-151 (LLAA…LMIS), 157-177 (LMSV…PLLF), 204-224 (LGVN…GLMP), 236-256 (GIGF…WPIG), 265-284 (LLVL…AMLG), 289-311 (APAL…AWAC), 325-345 (ALLL…AMLM), and 349-369 (SDNL…LMLL).

This sequence belongs to the major facilitator superfamily. YcaD (TC 2.A.1.26) family.

It localises to the cell inner membrane. This is an uncharacterized protein from Enterobacter sp. (strain 638).